The chain runs to 397 residues: Cysteine protease ATG4A (397 aa).

The active-site Nucleophile is C79. Active-site residues include D279 and H281. The LIR motif lies at 392 to 395 (FEIL).

It belongs to the peptidase C54 family.

It localises to the cytoplasm. The enzyme catalyses [protein]-C-terminal L-amino acid-glycyl-phosphatidylethanolamide + H2O = [protein]-C-terminal L-amino acid-glycine + a 1,2-diacyl-sn-glycero-3-phosphoethanolamine. Its function is as follows. Cysteine protease that plays a key role in autophagy by mediating both proteolytic activation and delipidation of ATG8 family proteins. The protease activity is required for proteolytic activation of ATG8 family proteins: cleaves the C-terminal amino acid of ATG8 proteins to reveal a C-terminal glycine. Exposure of the glycine at the C-terminus is essential for ATG8 proteins conjugation to phosphatidylethanolamine (PE) and insertion to membranes, which is necessary for autophagy. Protease activity is also required to counteract formation of high-molecular weight conjugates of ATG8 proteins (ATG8ylation): acts as a deubiquitinating-like enzyme that removes ATG8 conjugated to other proteins, such as ATG3. In addition to the protease activity, also mediates delipidation of ATG8 family proteins. Catalyzes delipidation of PE-conjugated forms of ATG8 proteins during macroautophagy. In Xenopus laevis (African clawed frog), this protein is Cysteine protease ATG4A.